The sequence spans 583 residues: Thiol:disulfide interchange protein DsbD (583 aa).

The N-terminal stretch at 1–20 (MLKRFIFLLVGITLTLSAHA) is a signal peptide. Disulfide bonds link Cys123–Cys128 and Cys200–Cys322. 8 helical membrane passes run 185 to 205 (IFWF…LPML), 237 to 257 (LTYT…QVAL), 261 to 281 (PVLI…FGLF), 302 to 322 (GGAF…ASPC), 344 to 364 (GLAL…ITLF), 375 to 395 (WLLK…VFLL), 405 to 425 (PLMW…VIPT), and 433 to 453 (VRIV…NLVW). Residues 440–583 (TFAVASYPWA…NQFLNWLNQL (144 aa)) form the Thioredoxin domain. Cys500 and Cys503 are joined by a disulfide.

Belongs to the thioredoxin family. DsbD subfamily.

Its subcellular location is the cell inner membrane. It catalyses the reaction [protein]-dithiol + NAD(+) = [protein]-disulfide + NADH + H(+). The catalysed reaction is [protein]-dithiol + NADP(+) = [protein]-disulfide + NADPH + H(+). Required to facilitate the formation of correct disulfide bonds in some periplasmic proteins and for the assembly of the periplasmic c-type cytochromes. Acts by transferring electrons from cytoplasmic thioredoxin to the periplasm. This transfer involves a cascade of disulfide bond formation and reduction steps. The protein is Thiol:disulfide interchange protein DsbD of Actinobacillus pleuropneumoniae serotype 5b (strain L20).